Here is a 110-residue protein sequence, read N- to C-terminus: MFELKTVALFVITALAEIIGCYLPYLWLNQNKSPLLLIPAAISLALFAWLLTLHPSAAGRVYAAYGGVYIFVAIFWLWVVDDIIPSNWDFLGASVALLGMAIIMFAPRST.

4 helical membrane passes run 7 to 27, 33 to 53, 61 to 81, and 83 to 103; these read VALF…PYLW, SPLL…LLTL, VYAA…WVVD, and IIPS…MAII.

It belongs to the UPF0060 family.

The protein localises to the cell inner membrane. This chain is UPF0060 membrane protein Mfla_2554, found in Methylobacillus flagellatus (strain ATCC 51484 / DSM 6875 / VKM B-1610 / KT).